Here is a 332-residue protein sequence, read N- to C-terminus: Beta-ketoacyl-[acyl-carrier-protein] synthase III (332 aa).

Active-site residues include cysteine 116 and histidine 257. The interval 258 to 262 is ACP-binding; the sequence is QANQR. Residue asparagine 287 is part of the active site.

It belongs to the thiolase-like superfamily. FabH family. As to quaternary structure, homodimer.

It localises to the cytoplasm. The catalysed reaction is malonyl-[ACP] + acetyl-CoA + H(+) = 3-oxobutanoyl-[ACP] + CO2 + CoA. It functions in the pathway lipid metabolism; fatty acid biosynthesis. Functionally, catalyzes the condensation reaction of fatty acid synthesis by the addition to an acyl acceptor of two carbons from malonyl-ACP. Catalyzes the first condensation reaction which initiates fatty acid synthesis and may therefore play a role in governing the total rate of fatty acid production. Possesses both acetoacetyl-ACP synthase and acetyl transacylase activities. Its substrate specificity determines the biosynthesis of branched-chain and/or straight-chain of fatty acids. The chain is Beta-ketoacyl-[acyl-carrier-protein] synthase III from Acaryochloris marina (strain MBIC 11017).